A 391-amino-acid chain; its full sequence is Ferrochelatase (391 aa).

Residues histidine 196 and glutamate 281 each coordinate Fe cation.

Belongs to the ferrochelatase family.

The protein localises to the cytoplasm. The enzyme catalyses heme b + 2 H(+) = protoporphyrin IX + Fe(2+). It functions in the pathway porphyrin-containing compound metabolism; protoheme biosynthesis; protoheme from protoporphyrin-IX: step 1/1. Functionally, catalyzes the ferrous insertion into protoporphyrin IX. The protein is Ferrochelatase of Prochlorococcus marinus (strain AS9601).